A 384-amino-acid chain; its full sequence is Na(+)/H(+) antiporter NhaA (384 aa).

A run of 11 helical transmembrane segments spans residues 7 to 27 (FYNLETIGGILLFIAAVLAII), 58 to 78 (LLLWINDGLMAIYFLLIGLEI), 94 to 114 (LVPALTALAGLLFPALIFIFF), 124 to 144 (GWAIPTATDIAFTLGIVSLLG), 153 to 173 (ILLTAIAIFDDIAAIVIIALF), 179 to 199 (SLLSLSLALVFTLILIGLNYF), 204 to 224 (ISVFMLFGVALWIAVLKSGVH), 256 to 276 (VVFLILPLFAFANAGVSFVGL), 285 to 305 (VVLGIGLGLFLGKQLGIFLSL), 325 to 345 (VYGIALICGVGFTMSLFIGSL), and 357 to 377 (MVKIGVVFGSFIAGLTGFLVL).

Belongs to the NhaA Na(+)/H(+) (TC 2.A.33) antiporter family.

It localises to the cell inner membrane. It catalyses the reaction Na(+)(in) + 2 H(+)(out) = Na(+)(out) + 2 H(+)(in). In terms of biological role, na(+)/H(+) antiporter that extrudes sodium in exchange for external protons. In Legionella pneumophila (strain Corby), this protein is Na(+)/H(+) antiporter NhaA.